We begin with the raw amino-acid sequence, 325 residues long: HPr kinase/phosphorylase (325 aa).

Catalysis depends on residues His152 and Lys173. 167-174 (GESGLGKS) is an ATP binding site. Position 174 (Ser174) interacts with Mg(2+). Residue Asp191 is the Proton acceptor; for phosphorylation activity. Proton donor; for dephosphorylation activity of the active site. An important for the catalytic mechanism of both phosphorylation and dephosphorylation region spans residues 215-224 (LEVRGIGLLD). Position 216 (Glu216) interacts with Mg(2+). Arg258 is an active-site residue. Residues 279-284 (AVDAGR) are important for the catalytic mechanism of dephosphorylation.

The protein belongs to the HPrK/P family. As to quaternary structure, homohexamer. Requires Mg(2+) as cofactor.

It catalyses the reaction [HPr protein]-L-serine + ATP = [HPr protein]-O-phospho-L-serine + ADP + H(+). It carries out the reaction [HPr protein]-O-phospho-L-serine + phosphate + H(+) = [HPr protein]-L-serine + diphosphate. Functionally, catalyzes the ATP- as well as the pyrophosphate-dependent phosphorylation of a specific serine residue in HPr, a phosphocarrier protein of the phosphoenolpyruvate-dependent sugar phosphotransferase system (PTS). HprK/P also catalyzes the pyrophosphate-producing, inorganic phosphate-dependent dephosphorylation (phosphorolysis) of seryl-phosphorylated HPr (P-Ser-HPr). The sequence is that of HPr kinase/phosphorylase from Leptothrix cholodnii (strain ATCC 51168 / LMG 8142 / SP-6) (Leptothrix discophora (strain SP-6)).